The sequence spans 489 residues: Ubiquitin-like-specific protease ESD4 (489 aa).

The tract at residues 43–66 (AMSEDSGKPASSNPTISRISRYPD) is disordered. The span at 51–60 (PASSNPTISR) shows a compositional bias: polar residues. The stretch at 200-223 (ASSLEAYRKLMQSAEKRNSKLEAL) forms a coiled coil. Residues histidine 380, aspartate 397, and cysteine 448 contribute to the active site.

It belongs to the peptidase C48 family. Interacts with NUA (via N-terminus). Interacts with KIN10. In terms of tissue distribution, expressed in seedlings, leaves, shoots, flowers and roots.

The protein resides in the nucleus membrane. The enzyme catalyses Hydrolysis of the alpha-linked peptide bond in the sequence Gly-Gly-|-Ala-Thr-Tyr at the C-terminal end of the small ubiquitin-like modifier (SUMO) propeptide, Smt3, leading to the mature form of the protein. A second reaction involves the cleavage of an epsilon-linked peptide bond between the C-terminal glycine of the mature SUMO and the lysine epsilon-amino group of the target protein.. With respect to regulation, inhibited by thiol reagent and N-ethylmaleimide, but not by ubiquitin aldehyde, pepstatin A or benzamidine HCl. Its function is as follows. Protease that catalyzes two essential functions in the SUMO pathway: processing of full-length SUMOs to their mature forms and deconjugation of SUMO from targeted proteins. Cleaves precursors of SUM1 and SUM2, but not of SUM3 or SUM5. Able to release SUM1 and SUM2 from conjugates, but unable to cleave SUM3. Acts predominantly as an isopeptidase, cleaving SUMO-conjugated proteins better than SUMO peptides. Plays an important role in the control of flowering time. In Arabidopsis thaliana (Mouse-ear cress), this protein is Ubiquitin-like-specific protease ESD4 (ESD4).